The sequence spans 616 residues: uncharacterized protein (616 aa).

2 disordered regions span residues 166–243 (SRTY…TPEL) and 272–298 (DHEE…IEEI). Positions 184-200 (RVDESRPSENSSRHDYV) are enriched in basic and acidic residues. Positions 221–237 (TRTSNVTQTQPPTNQVF) are enriched in polar residues. Residues 272–287 (DHEEEEGQDDDEETEI) are compositionally biased toward acidic residues. Residues 343-417 (ILIKLKFMND…VHCHISTTPY (75 aa)) form the Ubiquitin-like domain.

This is an uncharacterized protein from Caenorhabditis elegans.